Consider the following 493-residue polypeptide: Glutamyl-tRNA(Gln) amidotransferase subunit A (493 aa).

Residues Lys-79 and Ser-159 each act as charge relay system in the active site. Ser-183 (acyl-ester intermediate) is an active-site residue.

This sequence belongs to the amidase family. GatA subfamily. As to quaternary structure, heterotrimer of A, B and C subunits.

The enzyme catalyses L-glutamyl-tRNA(Gln) + L-glutamine + ATP + H2O = L-glutaminyl-tRNA(Gln) + L-glutamate + ADP + phosphate + H(+). Allows the formation of correctly charged Gln-tRNA(Gln) through the transamidation of misacylated Glu-tRNA(Gln) in organisms which lack glutaminyl-tRNA synthetase. The reaction takes place in the presence of glutamine and ATP through an activated gamma-phospho-Glu-tRNA(Gln). This is Glutamyl-tRNA(Gln) amidotransferase subunit A from Brucella abortus (strain S19).